We begin with the raw amino-acid sequence, 434 residues long: ATP-dependent RNA helicase SUB2 (434 aa).

A compositionally biased stretch (acidic residues) spans 1-16; the sequence is MSGEEDLIDYSDDELN. Positions 1-32 are disordered; the sequence is MSGEEDLIDYSDDELNNETTAPASNGKKGDAA. Positions 50 to 78 match the Q motif motif; sequence TGFRDFLLKPELLRAIADCGFEHPSEVQQ. A Helicase ATP-binding domain is found at 81 to 256; it reads IPQAMLGGDI…RKFMQNPTEH (176 aa). 94–101 contributes to the ATP binding site; the sequence is AKSGLGKT. Positions 203–206 match the DEAD box motif; it reads DECD. The 162-residue stretch at 268 to 429 folds into the Helicase C-terminal domain; that stretch reads GLQQYYIPLE…EFPKEGIDAS (162 aa).

The protein belongs to the DEAD box helicase family. DECD subfamily.

It is found in the nucleus. The catalysed reaction is ATP + H2O = ADP + phosphate + H(+). ATP-binding RNA helicase involved in transcription elongation and required for the export of mRNA out of the nucleus. SUB2 also plays a role in pre-mRNA splicing and spliceosome assembly. May be involved in rDNA and telomeric silencing, and maintenance of genome integrity. The polypeptide is ATP-dependent RNA helicase SUB2 (SUB2) (Chaetomium globosum (strain ATCC 6205 / CBS 148.51 / DSM 1962 / NBRC 6347 / NRRL 1970) (Soil fungus)).